The primary structure comprises 298 residues: Glutamyl-Q tRNA(Asp) synthetase (298 aa).

L-glutamate contacts are provided by residues 9–13 (RFAPS) and glutamate 45. The short motif at 12–22 (PSPSGELHFGS) is the 'HIGH' region element. 4 residues coordinate Zn(2+): cysteine 101, cysteine 103, tyrosine 115, and cysteine 119. 2 residues coordinate L-glutamate: tyrosine 172 and arginine 190. The 'KMSKS' region signature appears at 228–232 (KLSKQ). Lysine 231 provides a ligand contact to ATP.

Belongs to the class-I aminoacyl-tRNA synthetase family. GluQ subfamily. Requires Zn(2+) as cofactor.

Its function is as follows. Catalyzes the tRNA-independent activation of glutamate in presence of ATP and the subsequent transfer of glutamate onto a tRNA(Asp). Glutamate is transferred on the 2-amino-5-(4,5-dihydroxy-2-cyclopenten-1-yl) moiety of the queuosine in the wobble position of the QUC anticodon. The sequence is that of Glutamyl-Q tRNA(Asp) synthetase from Citrobacter koseri (strain ATCC BAA-895 / CDC 4225-83 / SGSC4696).